The chain runs to 366 residues: Chorismate synthase (366 aa).

NADP(+)-binding residues include Arg48 and Arg54. Residues 125 to 127 (RSS), 238 to 239 (NA), Gly278, 293 to 297 (KPTSS), and Arg319 contribute to the FMN site.

This sequence belongs to the chorismate synthase family. In terms of assembly, homotetramer. FMNH2 serves as cofactor.

It catalyses the reaction 5-O-(1-carboxyvinyl)-3-phosphoshikimate = chorismate + phosphate. Its pathway is metabolic intermediate biosynthesis; chorismate biosynthesis; chorismate from D-erythrose 4-phosphate and phosphoenolpyruvate: step 7/7. Its function is as follows. Catalyzes the anti-1,4-elimination of the C-3 phosphate and the C-6 proR hydrogen from 5-enolpyruvylshikimate-3-phosphate (EPSP) to yield chorismate, which is the branch point compound that serves as the starting substrate for the three terminal pathways of aromatic amino acid biosynthesis. This reaction introduces a second double bond into the aromatic ring system. The polypeptide is Chorismate synthase (Neisseria meningitidis serogroup A / serotype 4A (strain DSM 15465 / Z2491)).